The following is a 550-amino-acid chain: Chaperonin GroEL (550 aa).

ATP contacts are provided by residues 30 to 33 (TLGP), lysine 51, 87 to 91 (DGTTT), glycine 415, 479 to 481 (NAA), and aspartate 495.

The protein belongs to the chaperonin (HSP60) family. As to quaternary structure, forms a cylinder of 14 subunits composed of two heptameric rings stacked back-to-back. Interacts with the co-chaperonin GroES.

It is found in the cytoplasm. The catalysed reaction is ATP + H2O + a folded polypeptide = ADP + phosphate + an unfolded polypeptide.. Its function is as follows. Together with its co-chaperonin GroES, plays an essential role in assisting protein folding. The GroEL-GroES system forms a nano-cage that allows encapsulation of the non-native substrate proteins and provides a physical environment optimized to promote and accelerate protein folding. In Polaromonas sp. (strain JS666 / ATCC BAA-500), this protein is Chaperonin GroEL.